Here is a 138-residue protein sequence, read N- to C-terminus: Superoxide dismutase [Mn] (138 aa).

Residues His-1, His-49, Asp-133, and His-137 each contribute to the Mn(2+) site.

The protein belongs to the iron/manganese superoxide dismutase family. The cofactor is Mn(2+).

The enzyme catalyses 2 superoxide + 2 H(+) = H2O2 + O2. In terms of biological role, destroys superoxide anion radicals which are normally produced within the cells and which are toxic to biological systems. The chain is Superoxide dismutase [Mn] (sodA) from Mycobacterium celatum.